Consider the following 357-residue polypeptide: UPF0283 membrane protein BSUIS_A1077 (357 aa).

The interval 1 to 36 (MSDKTPRKPTAFRLEQPARVSAASEQEEPRHPRAVK) is disordered. Basic and acidic residues predominate over residues 27 to 36 (EEPRHPRAVK). Transmembrane regions (helical) follow at residues 78-98 (ILFG…TEDL) and 109-129 (LGWT…AIIL).

This sequence belongs to the UPF0283 family.

The protein localises to the cell inner membrane. This Brucella suis (strain ATCC 23445 / NCTC 10510) protein is UPF0283 membrane protein BSUIS_A1077.